The primary structure comprises 604 residues: 3-hydroxy-3-methylglutaryl-coenzyme A reductase (604 aa).

The segment at 1-31 is disordered; it reads MDVRRRSEKPAYPTKEFAAGEKPLKPHKQQQ. 2 helical membrane-spanning segments follow: residues 40–62 and 90–110; these read ASDA…FFSV and AIAS…IGFV. A linker region spans residues 111-189; it reads QSFVSRDNND…PLVTPAASEE (79 aa). The tract at residues 190-604 is catalytic; that stretch reads DEEIIKSVVQ…STKDVTKASS (415 aa). Glu-283 (charge relay system) is an active-site residue. Asn-347 carries an N-linked (GlcNAc...) asparagine glycan. Lys-415 serves as the catalytic Charge relay system. Asn-460 carries N-linked (GlcNAc...) asparagine glycosylation. The active-site Charge relay system is the Asp-491. The active-site Proton donor is His-589. A glycan (N-linked (GlcNAc...) asparagine) is linked at Asn-593.

This sequence belongs to the HMG-CoA reductase family. Found in protoplasts and leaves submitted to stress. Low levels found in apexes, anthers and roots.

The protein localises to the endoplasmic reticulum membrane. It carries out the reaction (R)-mevalonate + 2 NADP(+) + CoA = (3S)-3-hydroxy-3-methylglutaryl-CoA + 2 NADPH + 2 H(+). It participates in metabolic intermediate biosynthesis; (R)-mevalonate biosynthesis; (R)-mevalonate from acetyl-CoA: step 3/3. Its function is as follows. Catalyzes the synthesis of mevalonate, the specific precursor of all isoprenoid compounds present in plants. Possible role in plant defense mechanisms as well as in the cell cycle. In Nicotiana sylvestris (Wood tobacco), this protein is 3-hydroxy-3-methylglutaryl-coenzyme A reductase (HMGR).